A 385-amino-acid chain; its full sequence is 1-deoxy-D-xylulose 5-phosphate reductoisomerase (385 aa).

NADPH is bound by residues Thr-10, Gly-11, Ser-12, Ile-13, Lys-37, and Asn-124. Lys-125 provides a ligand contact to 1-deoxy-D-xylulose 5-phosphate. Glu-126 serves as a coordination point for NADPH. Residue Asp-150 participates in Mn(2+) binding. Ser-151, Glu-152, Ser-176, and His-199 together coordinate 1-deoxy-D-xylulose 5-phosphate. Glu-152 serves as a coordination point for Mn(2+). Gly-205 serves as a coordination point for NADPH. 1-deoxy-D-xylulose 5-phosphate-binding residues include Ser-212, Asn-217, Lys-218, and Glu-221. Glu-221 is a Mn(2+) binding site.

This sequence belongs to the DXR family. It depends on Mg(2+) as a cofactor. Mn(2+) is required as a cofactor.

The catalysed reaction is 2-C-methyl-D-erythritol 4-phosphate + NADP(+) = 1-deoxy-D-xylulose 5-phosphate + NADPH + H(+). Its pathway is isoprenoid biosynthesis; isopentenyl diphosphate biosynthesis via DXP pathway; isopentenyl diphosphate from 1-deoxy-D-xylulose 5-phosphate: step 1/6. In terms of biological role, catalyzes the NADPH-dependent rearrangement and reduction of 1-deoxy-D-xylulose-5-phosphate (DXP) to 2-C-methyl-D-erythritol 4-phosphate (MEP). This is 1-deoxy-D-xylulose 5-phosphate reductoisomerase from Clostridium novyi (strain NT).